The following is a 269-amino-acid chain: Shikimate dehydrogenase (NADP(+)) (269 aa).

Residues Thr-14–Ser-16 and Thr-60 each bind shikimate. The active-site Proton acceptor is the Lys-64. Asp-76 contributes to the NADP(+) binding site. Positions 85 and 100 each coordinate shikimate. NADP(+)-binding positions include Gly-122–Ala-126 and Met-208. Tyr-210 contributes to the shikimate binding site. Gly-232 lines the NADP(+) pocket.

Belongs to the shikimate dehydrogenase family. As to quaternary structure, homodimer.

It catalyses the reaction shikimate + NADP(+) = 3-dehydroshikimate + NADPH + H(+). It functions in the pathway metabolic intermediate biosynthesis; chorismate biosynthesis; chorismate from D-erythrose 4-phosphate and phosphoenolpyruvate: step 4/7. Its function is as follows. Involved in the biosynthesis of the chorismate, which leads to the biosynthesis of aromatic amino acids. Catalyzes the reversible NADPH linked reduction of 3-dehydroshikimate (DHSA) to yield shikimate (SA). The sequence is that of Shikimate dehydrogenase (NADP(+)) from Caldivirga maquilingensis (strain ATCC 700844 / DSM 13496 / JCM 10307 / IC-167).